Consider the following 472-residue polypeptide: Deoxyribodipyrimidine photo-lyase (472 aa).

The Photolyase/cryptochrome alpha/beta domain maps to 2–134; the sequence is TTHLVWFRQD…VCEGFDDSVI (133 aa). Residues asparagine 109 and glutamate 110 each contribute to the (6R)-5,10-methylene-5,6,7,8-tetrahydrofolate site. Tyrosine 223 is an FAD binding site. Arginine 227 is a DNA binding site. Residues 235–239, tryptophan 272, and 275–282 contribute to the FAD site; these read TSRLS and ELIWREFY. Interaction with DNA stretches follow at residues 275-282 and 342-343; these read ELIWREFY and NR. 373 to 375 serves as a coordination point for FAD; that stretch reads DGD. Residue glutamine 405 participates in DNA binding.

The protein belongs to the DNA photolyase class-1 family. Monomer. FAD is required as a cofactor. The cofactor is (6R)-5,10-methylene-5,6,7,8-tetrahydrofolate.

It catalyses the reaction cyclobutadipyrimidine (in DNA) = 2 pyrimidine residues (in DNA).. Involved in repair of UV radiation-induced DNA damage. Catalyzes the light-dependent monomerization (300-600 nm) of cyclobutyl pyrimidine dimers (in cis-syn configuration), which are formed between adjacent bases on the same DNA strand upon exposure to ultraviolet radiation. This Escherichia coli (strain K12) protein is Deoxyribodipyrimidine photo-lyase (phrB).